Consider the following 410-residue polypeptide: Peptidase T (410 aa).

Residue H79 participates in Zn(2+) binding. Residue D81 is part of the active site. A Zn(2+)-binding site is contributed by D142. E176 serves as the catalytic Proton acceptor. E177, D199, and H381 together coordinate Zn(2+).

It belongs to the peptidase M20B family. Zn(2+) serves as cofactor.

Its subcellular location is the cytoplasm. The enzyme catalyses Release of the N-terminal residue from a tripeptide.. Functionally, cleaves the N-terminal amino acid of tripeptides. This is Peptidase T (pepT) from Bacillus subtilis (strain 168).